The chain runs to 895 residues: MEVQLGLGRVYPRPPSKTYRGAFQNLFQSVREVIQNPGPRHPEAASAAPPGASLQQQQQQQQETSPRQQQQQQQGEDGSPQAHRRGPTGYLVLDEEQQPSQPQSAPECHPERGCVPEPGAAVAAGKGLPQQLPAPPDEDDSAAPSTLSLLGPTFPGLSSCSADLKDILSEASTMQLLQQQQQEAVSEGSSSGRAREASGAPTSSKDNYLEGTSTISDSAKELCKAVSVSMGLGVEALEHLSPGEQLRGDCMYAPVLGVPPAVRPTPCAPLAECKGSLLDDSAGKSTEDTAEYSPFKGGYTKGLEGESLGCSGSAAAGSSGTLELPSTLSLYKSGALDEAAAYQSRDYYNFPLALAGPPPPPPPPHPHARIKLENPLDYGSAWAAAAAQCRYGDLASLHGAGAAGPGSGSPSAAASSSWHTLFTAEEGQLYGPCGGGGGGGGGGGGGAGEAGAVAPYGYTRPPQGLAGQEGDFTAPDVWYPGGMVSRVPYPSPTCVKSEMGPWMDSYSGPYGDMRLETARDHVLPIDYYFPPQKTCLICGDEASGCHYGALTCGSCKVFFKRAAEGKQKYLCASRNDCTIDKFRRKNCPSCRLRKCYEAGMTLGARKLKKLGNLKLQEEGEASSTTSPTEETAQKLTVSHIEGYECQPIFLNVLEAIEPGVVCAGHDNNQPDSFAALLSSLNELGERQLVHVVKWAKALPGFRNLHVDDQMAVIQYSWMGLMVFAMGWRSFTNVNSRMLYFAPDLVFNEYRMHKSRMYSQCVRMRHLSQEFGWLQITPQEFLCMKALLLFSIIPVDGLKNQKFFDELRMNYIKELDRIIACKRKNPTSCSRRFYQLTKLLDSVQPIARELHQFTFDLLIKSHMVSVDFPEMMAEIISVQVPKILSGKVKPIYFHTQ.

Positions Met-1 to Lys-533 are modulating. An interaction with ZNF318 region spans residues Met-1–Ala-562. Disordered stretches follow at residues Val-33–Leu-150 and Gln-178–Gly-211. 2 stretches are compositionally biased toward low complexity: residues Ala-44 to Gln-81 and Gln-178 to Ala-200. Phosphoserine; by CDK9 is present on Ser-65. Phosphoserine is present on Ser-79. The span at Pro-201–Gly-211 shows a compositional bias: polar residues. A Phosphotyrosine; by CSK modification is found at Tyr-208. Position 241 is a phosphoserine (Ser-241). A Phosphotyrosine; by CSK and TNK2 modification is found at Tyr-252. Tyr-292, Tyr-331, Tyr-342, and Tyr-347 each carry phosphotyrosine; by CSK. A Phosphotyrosine; by CSK and TNK2 modification is found at Tyr-348. Lys-371 participates in a covalent cross-link: Glycyl lysine isopeptide (Lys-Gly) (interchain with G-Cter in SUMO). Residue Tyr-378 is modified to Phosphotyrosine; by CSK. Residue Lys-496 forms a Glycyl lysine isopeptide (Lys-Gly) (interchain with G-Cter in SUMO) linkage. Tyr-510 and Tyr-527 each carry phosphotyrosine; by CSK. The interaction with LPXN stretch occupies residues Tyr-527–Thr-894. The segment at residues Thr-534–Leu-607 is a DNA-binding region (nuclear receptor). NR C4-type zinc fingers lie at residues Cys-535 to Cys-555 and Cys-571 to Cys-595. An interaction with HIPK3 region spans residues Tyr-547 to Val-637. Residues Gln-567–Thr-894 are interaction with CCAR1. The interval Met-600–Thr-894 is interaction with KAT7. The residue at position 626 (Ser-626) is a Phosphoserine; by STK4/MST1. One can recognise an NR LBD domain in the interval Glu-644–Ile-875. 17beta-hydroxy-5alpha-androstan-3-one is bound by residues Asn-681 and Arg-728. Glycyl lysine isopeptide (Lys-Gly) (interchain with G-Cter in ubiquitin) cross-links involve residues Lys-821 and Lys-823. Thr-853 contributes to the 17beta-hydroxy-5alpha-androstan-3-one binding site. Tyr-891 carries the post-translational modification Phosphotyrosine; by CSK.

This sequence belongs to the nuclear hormone receptor family. NR3 subfamily. In terms of assembly, binds DNA as a homodimer. Part of a ternary complex containing AR, EFCAB6/DJBP and PARK7. Interacts with HIPK3 and NR0B2 in the presence of androgen. The ligand binding domain interacts with KAT7/HBO1 in the presence of dihydrotestosterone. Interacts with EFCAB6/DJBP, PQBP1, RANBP9, RBAK, SPDEF, SRA1, TGFB1I1 and RREB1. Interacts with ZMIZ1/ZIMP10 and ZMIZ2/ZMIP7 which both enhance its transactivation activity. Interacts with SLC30A9 and RAD54L2/ARIP4. Interacts with MACROD1 (via macro domain). Interacts via the ligand-binding domain with LXXLL and FXXLF motifs from NCOA1, NCOA2, NCOA3 and MAGEA11. Interacts (via nuclear receptor DNA binding domain and nuclear receptor ligand binding domain) with NCOA4. The AR N-terminal poly-Gln region binds Ran resulting in enhancement of AR-mediated transactivation. Ran-binding decreases as the poly-Gln length increases. Interacts with HIP1 (via coiled coil domain). Interacts (via ligand-binding domain) with TRIM68. Interacts with TNK2. Interacts with USP26. Interacts with RNF6. Interacts (regulated by RNF6 probably through polyubiquitination) with RNF14; regulates AR transcriptional activity. Interacts with PRMT2 and TRIM24. Interacts with RACK1. Interacts with RANBP10; this interaction enhances dihydrotestosterone-induced AR transcriptional activity. Interacts with PRPF6 in a hormone-independent way; this interaction enhances dihydrotestosterone-induced AR transcriptional activity. Interacts with STK4/MST1. Interacts with ZIPK/DAPK3. Interacts with LPXN. Interacts with MAK. Part of a complex containing AR, MAK and NCOA3. Interacts with CRY1. Interacts with CCAR1 and GATA2. Interacts with ZNF318. Interacts with BUD31. Interacts with ARID4A. Interacts with ARID4B. Interacts (via NR LBD domain) with ZBTB7A; the interaction is direct and androgen-dependent. Interacts with NCOR1. Interacts with NCOR2. Interacts with CRY2 in a ligand-dependent manner. Post-translationally, phosphorylated in prostate cancer cells in response to several growth factors including EGF. Phosphorylation is induced by c-Src kinase (CSK). Tyr-510 is one of the major phosphorylation sites and an increase in phosphorylation and Src kinase activity is associated with prostate cancer progression. Phosphorylation by TNK2 enhances the DNA-binding and transcriptional activity. Phosphorylation at Ser-65 by CDK9 regulates AR promoter selectivity and cell growth. In terms of processing, sumoylated on Lys-371 (major) and Lys-496. Ubiquitinated. Deubiquitinated by USP26. 'Lys-6' and 'Lys-27'-linked polyubiquitination by RNF6 modulates AR transcriptional activity and specificity. Palmitoylated by ZDHHC7 and ZDHHC21. Palmitoylation is required for plasma membrane targeting and for rapid intracellular signaling via ERK and AKT kinases and cAMP generation.

It is found in the nucleus. The protein localises to the cytoplasm. Its function is as follows. Steroid hormone receptors are ligand-activated transcription factors that regulate eukaryotic gene expression and affect cellular proliferation and differentiation in target tissues. Transcription factor activity is modulated by bound coactivator and corepressor proteins like ZBTB7A that recruits NCOR1 and NCOR2 to the androgen response elements/ARE on target genes, negatively regulating androgen receptor signaling and androgen-induced cell proliferation. Transcription activation is also down-regulated by NR0B2. Activated, but not phosphorylated, by HIPK3 and ZIPK/DAPK3. The sequence is that of Androgen receptor (AR) from Macaca mulatta (Rhesus macaque).